A 741-amino-acid chain; its full sequence is 2-5A-dependent ribonuclease (741 aa).

Residues 1–21 (MESRDHNNPQEGPTSSSGRRA) are disordered. The segment covering 9–18 (PQEGPTSSSG) has biased composition (polar residues). ANK repeat units follow at residues 24–53 (EDNH…NVNF), 58–87 (GGWT…DPVL), 91–120 (NGAT…DVNE), 124–153 (YGFT…NVNL), 167–197 (GGAT…DVNA), 201–234 (MGRN…DVNV), 238–268 (RGKT…EIND), 272–301 (DGKT…STDC), and 303–329 (DLVM…KEDF). 2-5A binding (P-loop) stretches follow at residues 229–242 (GADV…GKTP) and 253–275 (GLVQ…DGKT). The Protein kinase domain maps to 365–586 (IDEKYKIADT…LSDLLGHPFF (222 aa)). The segment at 395–444 (CEGSPRAQREVSCLQSSRENSHLVTFYGSESHRGHLFVCVTLCEQTLEAC) adopts a C6-type; atypical zinc-finger fold. Positions 589–723 (WESRYRTLRN…KHFPQTHSPN (135 aa)) constitute a KEN domain. Lys-684 carries the post-translational modification N6-acetyllysine. The disordered stretch occupies residues 715–741 (HFPQTHSPNKPQCDGAGGASGLASPGC).

Belongs to the protein kinase superfamily. In terms of assembly, monomer (inactive form) or homodimer. Interacts with ABCE1; this interaction inhibits the RNASEL. Mn(2+) is required as a cofactor. Mg(2+) serves as cofactor. Highly expressed in spleen and thymus followed by prostate, testis, uterus, small intestine, colon and peripheral blood leukocytes.

It is found in the cytoplasm. It localises to the mitochondrion. With respect to regulation, after binding to 2-5A (5'-phosphorylated 2',5'-linked oligoadenylates) the homodimerization and subsequent activation occurs. Inhibited by RNASEL inhibitor ABCE1/RLI, a cytoplasmic member of the ATP-binding cassette (ABC) transporter family. Its function is as follows. Endoribonuclease that functions in the interferon (IFN) antiviral response. In INF treated and virus infected cells, RNASEL probably mediates its antiviral effects through a combination of direct cleavage of single-stranded viral RNAs, inhibition of protein synthesis through the degradation of rRNA, induction of apoptosis, and induction of other antiviral genes. RNASEL mediated apoptosis is the result of a JNK-dependent stress-response pathway leading to cytochrome c release from mitochondria and caspase-dependent apoptosis. Therefore, activation of RNASEL could lead to elimination of virus infected cells under some circumstances. In the crosstalk between autophagy and apoptosis proposed to induce autophagy as an early stress response to small double-stranded RNA and at later stages of prolonged stress to activate caspase-dependent proteolytic cleavage of BECN1 to terminate autophagy and promote apoptosis. Might play a central role in the regulation of mRNA turnover. Cleaves 3' of UpNp dimers, with preference for UU and UA sequences, to sets of discrete products ranging from between 4 and 22 nucleotides in length. The chain is 2-5A-dependent ribonuclease (RNASEL) from Homo sapiens (Human).